Here is a 180-residue protein sequence, read N- to C-terminus: Transcriptional repressor NrdR (180 aa).

A zinc finger lies at 3-34; it reads CPYCQNTSSRVLESRSTEAGQSIRRRRECLQC. An ATP-cone domain is found at 49–139; the sequence is ISVLKKDKSK…VYGEFKGITD (91 aa). Residues 148–180 form a disordered region; sequence QQEERESSSSPEWSDAGEEATVIEDSSQVMASS. Polar residues predominate over residues 171-180; it reads EDSSQVMASS.

Belongs to the NrdR family. Requires Zn(2+) as cofactor.

Negatively regulates transcription of bacterial ribonucleotide reductase nrd genes and operons by binding to NrdR-boxes. The sequence is that of Transcriptional repressor NrdR from Gloeothece citriformis (strain PCC 7424) (Cyanothece sp. (strain PCC 7424)).